We begin with the raw amino-acid sequence, 185 residues long: Elongation factor P (185 aa).

This sequence belongs to the elongation factor P family.

The protein resides in the cytoplasm. The protein operates within protein biosynthesis; polypeptide chain elongation. Its function is as follows. Involved in peptide bond synthesis. Stimulates efficient translation and peptide-bond synthesis on native or reconstituted 70S ribosomes in vitro. Probably functions indirectly by altering the affinity of the ribosome for aminoacyl-tRNA, thus increasing their reactivity as acceptors for peptidyl transferase. The polypeptide is Elongation factor P (Nitratidesulfovibrio vulgaris (strain DP4) (Desulfovibrio vulgaris)).